Here is a 232-residue protein sequence, read N- to C-terminus: Large ribosomal subunit protein uL1 (232 aa).

The protein belongs to the universal ribosomal protein uL1 family. As to quaternary structure, part of the 50S ribosomal subunit.

Its function is as follows. Binds directly to 23S rRNA. The L1 stalk is quite mobile in the ribosome, and is involved in E site tRNA release. In terms of biological role, protein L1 is also a translational repressor protein, it controls the translation of the L11 operon by binding to its mRNA. This Cereibacter sphaeroides (strain ATCC 17025 / ATH 2.4.3) (Rhodobacter sphaeroides) protein is Large ribosomal subunit protein uL1.